Reading from the N-terminus, the 237-residue chain is Myb-related protein MYBAS1 (237 aa).

HTH myb-type domains follow at residues 5-57 (REEM…VNYL) and 58-112 (HPGL…RKKA). The H-T-H motif DNA-binding region spans 33–57 (WDFVAKVSGLNRTGKSCRLRWVNYL). A Bipartite nuclear localization signal 1 motif is present at residues 62-65 (KHGR). The segment at residues 85 to 108 (WSRIARRLPGRTDNEIKNYWRTHM) is a DNA-binding region (H-T-H motif). A Bipartite nuclear localization signal 2 motif is present at residues 109-117 (RKKAQERRG).

It is found in the nucleus. In terms of biological role, transcription factor. The sequence is that of Myb-related protein MYBAS1 (MYBAS1) from Oryza sativa subsp. japonica (Rice).